We begin with the raw amino-acid sequence, 197 residues long: Imidazoleglycerol-phosphate dehydratase (197 aa).

It belongs to the imidazoleglycerol-phosphate dehydratase family.

Its subcellular location is the cytoplasm. It catalyses the reaction D-erythro-1-(imidazol-4-yl)glycerol 3-phosphate = 3-(imidazol-4-yl)-2-oxopropyl phosphate + H2O. Its pathway is amino-acid biosynthesis; L-histidine biosynthesis; L-histidine from 5-phospho-alpha-D-ribose 1-diphosphate: step 6/9. In Pseudomonas putida (strain W619), this protein is Imidazoleglycerol-phosphate dehydratase.